A 1070-amino-acid chain; its full sequence is DNA double-strand break repair Rad50 ATPase (1070 aa).

Residues arginine 12, 32 to 38 (NGSGKSS), and glutamine 142 contribute to the ATP site. Coiled-coil stretches lie at residues 227-257 (LEEL…RLQE), 369-403 (ECRT…EKAG), and 449-478 (LREL…KEIR). In terms of domain architecture, Zinc-hook spans 508–607 (LENLEDFNEL…KLNRLKEAKK (100 aa)). Zn(2+) contacts are provided by cysteine 555 and cysteine 558. Coiled coils occupy residues 570–614 (TAEE…QAYD) and 878–908 (LKRL…ADEL). 969–974 (LLSGGE) lines the ATP pocket.

It belongs to the SMC family. RAD50 subfamily. As to quaternary structure, homodimer. Forms a heterotetramer composed of two Mre11 subunits and two Rad50 subunits. The cofactor is Zn(2+).

In terms of biological role, part of the Rad50/Mre11 complex, which is involved in the early steps of DNA double-strand break (DSB) repair. The complex may facilitate opening of the processed DNA ends to aid in the recruitment of HerA and NurA. Rad50 controls the balance between DNA end bridging and DNA resection via ATP-dependent structural rearrangements of the Rad50/Mre11 complex. This is DNA double-strand break repair Rad50 ATPase from Methanosarcina mazei (strain ATCC BAA-159 / DSM 3647 / Goe1 / Go1 / JCM 11833 / OCM 88) (Methanosarcina frisia).